Here is a 142-residue protein sequence, read N- to C-terminus: Mitochondrial import receptor subunit TOM22 homolog (142 aa).

The span at 1–11 (MAAAVAAAGAG) shows a compositional bias: low complexity. The segment at 1–42 (MAAAVAAAGAGEPQSPDELLPKGDAEKPEEELEEDDDEELDE) is disordered. An N-acetylalanine modification is found at alanine 2. The Cytoplasmic portion of the chain corresponds to 2-83 (AAAVAAAGAG…AQKMYRFSRA (82 aa)). Serine 15 carries the phosphoserine modification. Acidic residues predominate over residues 27-42 (KPEEELEEDDDEELDE). The segment at 41–50 (DETLSERLWG) is import sequence; necessary for mitochondrion outer membrane localization and integration in the TOM complex. Threonine 43 carries the phosphothreonine modification. Phosphoserine is present on serine 45. Positions 83–103 (AALWIGTTSFMILVLPVVFET) are TMD; necessary for mitochondrion outer membrane localization and integration in the TOM complex. A helical transmembrane segment spans residues 84–103 (ALWIGTTSFMILVLPVVFET). Over 104–142 (EKLQMEQQQQLQQRQILLGPNTGLSGGMPGALPSLPGKI) the chain is Mitochondrial intermembrane. The interval 123 to 142 (PNTGLSGGMPGALPSLPGKI) is C-tail signal; necessary for mitochondrion outer membrane localization and integration in the TOM complex.

The protein belongs to the Tom22 family. As to quaternary structure, forms part of the preprotein translocase complex of the outer mitochondrial membrane (TOM complex) which consists of at least 7 different proteins (TOMM5, TOMM6, TOMM7, TOMM20, TOMM22, TOMM40 and TOMM70). Interacts with TOMM40. Interacts with PPP2R2B. Ubiquitous.

It is found in the mitochondrion outer membrane. In terms of biological role, central receptor component of the translocase of the outer membrane of mitochondria (TOM complex) responsible for the recognition and translocation of cytosolically synthesized mitochondrial preproteins. Together with the peripheral receptor TOM20 functions as the transit peptide receptor and facilitates the movement of preproteins into the translocation pore. Required for the translocation across the mitochondrial outer membrane of cytochrome P450 monooxygenases. In Homo sapiens (Human), this protein is Mitochondrial import receptor subunit TOM22 homolog (TOMM22).